The sequence spans 518 residues: Zinc finger protein 776 (518 aa).

One can recognise a KRAB domain in the interval 14–89; that stretch reads VTFEDVAVNF…HWTGVCTKKV (76 aa). Residues Lys-171, Lys-196, Lys-220, and Lys-247 each participate in a glycyl lysine isopeptide (Lys-Gly) (interchain with G-Cter in SUMO2) cross-link. A C2H2-type 1; degenerate zinc finger spans residues 208-230; sequence YICGESTIPFSNKHSLVLHQRLL. The C2H2-type 2; degenerate zinc-finger motif lies at 236–258; the sequence is YVCSDSGKFTSKSNSFNNHQGVR. C2H2-type zinc fingers lie at residues 264-286, 292-314, 320-342, 348-370, 376-398, 404-426, and 432-454; these read YQCGQCDESFWYKAHLTEHQRVH, YECGECDKSFSHKHSLVDHQRVH, YECDECGKSFSHKRSLVHHQRVH, YQCGECGKSFNHKCNLIQHQRVH, FECTACGKLFRSNSHLKEHQRVH, YECKECRKSFRYKSHLTEHQRVH, and YECRECGKCFHQKGSLIQHQQIH. A C2H2-type 10; degenerate zinc finger spans residues 460-482; that stretch reads HECGECGKCFHQKGSLIRHQQIH. A C2H2-type 11 zinc finger spans residues 488 to 510; that stretch reads HECGECGKCFRQKGNLIKHQRVH.

It belongs to the krueppel C2H2-type zinc-finger protein family.

The protein localises to the nucleus. Functionally, may be involved in transcriptional regulation. The chain is Zinc finger protein 776 (ZNF776) from Homo sapiens (Human).